The primary structure comprises 334 residues: MAVDITLLFRASVKTVKTRNKALGVAVGGGADGSRDELFRRSPRPKGDFSSRAREVISHIGKLRDFLLEHRKEYINAYSHTMSEYGRMTDTERDQIDQDAQIFMRTCKDAIQQLRTEAHKEIHSQQVKEHRTAVLDFVEDYLKRVCKLYSEQRAIRVKRVVDKKRLSKLEPEPHTKRKEPASEKSSHNASQDSEEKPAAEDLPEKPLAESQPELGTWGDGKGEDELSPEEIQMFEQENQRLIGEMNSLFDEVRQIEGKVVEISRLQEIFTEKVLQQETEIDSIHQLVVGATENIKEGNEDIREAIKNNAGFRVWILFFLVMCSFSLLFLDWYDS.

Over 1–308 (MAVDITLLFR…EDIREAIKNN (308 aa)) the chain is Cytoplasmic. 2 disordered regions span residues 29-50 (GGADGSRDELFRRSPRPKGDFS) and 166-225 (LSKL…GEDE). Basic and acidic residues-rich tracts occupy residues 33 to 50 (GSRDELFRRSPRPKGDFS), 166 to 186 (LSKLEPEPHTKRKEPASEKSS), and 193 to 207 (SEEKPAAEDLPEKPL). The region spanning 242-304 (IGEMNSLFDE…KEGNEDIREA (63 aa)) is the t-SNARE coiled-coil homology domain. A helical; Anchor for type IV membrane protein membrane pass occupies residues 309-329 (AGFRVWILFFLVMCSFSLLFL). Residues 330-334 (DWYDS) lie on the Vesicular side of the membrane.

The protein belongs to the syntaxin family. As to quaternary structure, component of a SNARE complex consisting of STX18, USE1L, BNIP1/SEC20L, and SEC22B. RINT1/TIP20L and ZW10 are associated with the complex through interaction with BNIP1/SEC20L. Interacts directly with USE1L and BNIP1/SEC20L.

The protein localises to the endoplasmic reticulum membrane. Its subcellular location is the golgi apparatus membrane. Its function is as follows. Syntaxin that may be involved in targeting and fusion of Golgi-derived retrograde transport vesicles with the ER. The sequence is that of Syntaxin-18 (Stx18) from Rattus norvegicus (Rat).